A 113-amino-acid polypeptide reads, in one-letter code: uncharacterized protein (113 aa).

The segment at 16-96 (LVDNETRCFH…STVHCKYCNH (81 aa)) adopts a CHY-type; degenerate zinc-finger fold. Residues C23, H25, C46, C49, C73, C76, C91, and C94 each contribute to the Zn(2+) site.

Its subcellular location is the cytoplasm. The protein localises to the nucleus. This is an uncharacterized protein from Schizosaccharomyces pombe (strain 972 / ATCC 24843) (Fission yeast).